The following is a 551-amino-acid chain: Alkaline/neutral invertase CINV1 (551 aa).

N-acetylmethionine is present on Met-1. A phosphoserine mark is found at Ser-11, Ser-14, Ser-44, and Ser-61. Residues 50–74 (TGYSRHDGIHDSPRGRSVLDTPLSS) form a disordered region. A compositionally biased stretch (basic and acidic residues) spans 53–63 (SRHDGIHDSPR). Thr-70 bears the Phosphothreonine mark. Ser-547 carries the post-translational modification Phosphoserine.

This sequence belongs to the glycosyl hydrolase 100 family. In terms of assembly, forms homohexamers. Interacts with PIP5K9. Interaction with PIP5K9 represses CINV1 activity. Interacts with GRF1, GRF2, GRF3, GRF4, GRF5, GRF6, GRF7, GRF8 and GRF10; these interactions are dependent of the phosphorylation at Ser-547. In terms of processing, phosphorylated at Ser-547 by CPK3 and CPK21. As to expression, expressed in radicle, hypocotyls, root tips and vascular cylinder, leaf vasculature, shoot stipules, trichomes, stem, stigma apex and base of siliques.

It is found in the cytoplasm. It localises to the cytosol. The protein resides in the nucleus. It catalyses the reaction Hydrolysis of terminal non-reducing beta-D-fructofuranoside residues in beta-D-fructofuranosides.. Functionally, cytosolic invertase that specifically cleaves sucrose into glucose and fructose and is involved in the regulation of multiple tissue development including primary root elongation, root hair growth, leaf and silique development, and floral transition. Is involved in osmotic stress-induced inhibition on lateral root growth by controlling the concentration of hexose in cells. May regulate sugar-mediated root development by controlling sucrose catabolism in root cells. Contributes to carbon partitioning and cellulose biosynthesis in seedlings. This is Alkaline/neutral invertase CINV1 from Arabidopsis thaliana (Mouse-ear cress).